The sequence spans 85 residues: UPF0291 protein str0508 (85 aa).

Positions 62–85 (TPEKLRQVQREKGLHGRSLDDPES) are disordered.

Belongs to the UPF0291 family.

Its subcellular location is the cytoplasm. This chain is UPF0291 protein str0508, found in Streptococcus thermophilus (strain CNRZ 1066).